Consider the following 355-residue polypeptide: Tyrosine recombinase XerC (355 aa).

One can recognise a Core-binding (CB) domain in the interval 4 to 89; it reads TQFDGDIDSF…AVRGFFAWAY (86 aa). The disordered stretch occupies residues 137 to 181; that stretch reads KDDGGAAAAPGSGKAAGKTADKSADTVNRSEAPARADKRDNARVT. The segment covering 141–154 has biased composition (low complexity); it reads GAAAAPGSGKAAGK. Residues 158 to 349 enclose the Tyr recombinase domain; it reads KSADTVNRSE…SIEQLKNRYG (192 aa). The segment covering 168 to 178 has biased composition (basic and acidic residues); sequence APARADKRDNA. Active-site residues include Arg200, Lys224, His301, Arg304, and His327. Tyr336 serves as the catalytic O-(3'-phospho-DNA)-tyrosine intermediate.

Belongs to the 'phage' integrase family. XerC subfamily. Forms a cyclic heterotetrameric complex composed of two molecules of XerC and two molecules of XerD.

It is found in the cytoplasm. Functionally, site-specific tyrosine recombinase, which acts by catalyzing the cutting and rejoining of the recombining DNA molecules. The XerC-XerD complex is essential to convert dimers of the bacterial chromosome into monomers to permit their segregation at cell division. It also contributes to the segregational stability of plasmids. The polypeptide is Tyrosine recombinase XerC (Bifidobacterium longum (strain DJO10A)).